Consider the following 102-residue polypeptide: Protein 108 (102 aa).

Residues 1–30 (MASVKSSSSSSSSSFISLLLLILLVIVLQS) form the signal peptide. Cystine bridges form between cysteine 41–cysteine 77, cysteine 51–cysteine 66, cysteine 67–cysteine 92, and cysteine 79–cysteine 99.

The protein belongs to the A9/FIL1 family. Stamen- and tapetum-specific.

It localises to the secreted. This is Protein 108 from Solanum lycopersicum (Tomato).